A 451-amino-acid chain; its full sequence is Chromosomal replication initiator protein DnaA (451 aa).

Positions 1–71 (MSEQEIWKKV…QTIMKDVIGY (71 aa)) are domain I, interacts with DnaA modulators. The tract at residues 71-112 (YEVEPKFFTAEQLAELDETSRKSNTPSEPQRQIIEYGHEGTD) is domain II. The tract at residues 113–329 (QFNTHNTFDT…GALTRLLAYS (217 aa)) is domain III, AAA+ region. 4 residues coordinate ATP: glycine 157, glycine 159, lysine 160, and threonine 161. Residues 330 to 451 (KLQGRPITTE…EDLEKEIRNQ (122 aa)) form a domain IV, binds dsDNA region.

This sequence belongs to the DnaA family. Oligomerizes as a right-handed, spiral filament on DNA at oriC.

The protein resides in the cytoplasm. Plays an essential role in the initiation and regulation of chromosomal replication. ATP-DnaA binds to the origin of replication (oriC) to initiate formation of the DNA replication initiation complex once per cell cycle. Binds the DnaA box (a 9 base pair repeat at the origin) and separates the double-stranded (ds)DNA. Forms a right-handed helical filament on oriC DNA; dsDNA binds to the exterior of the filament while single-stranded (ss)DNA is stabiized in the filament's interior. The ATP-DnaA-oriC complex binds and stabilizes one strand of the AT-rich DNA unwinding element (DUE), permitting loading of DNA polymerase. After initiation quickly degrades to an ADP-DnaA complex that is not apt for DNA replication. Binds acidic phospholipids. The sequence is that of Chromosomal replication initiator protein DnaA from Staphylococcus haemolyticus (strain JCSC1435).